We begin with the raw amino-acid sequence, 151 residues long: Sec-independent protein translocase protein TatB (151 aa).

Residues 1–21 form a helical membrane-spanning segment; sequence MFDIGFLELLICGVIALLVLG. 2 stretches are compositionally biased toward basic and acidic residues: residues 87-99 and 122-132; these read KYEH…DQTR and EPPHEPVRDEA. Residues 87-151 form a disordered region; it reads KYEHMILPDD…SPTSPSDKYS (65 aa). Low complexity predominate over residues 134-151; that stretch reads ASDQPSDSSPTSPSDKYS.

The protein belongs to the TatB family. As to quaternary structure, the Tat system comprises two distinct complexes: a TatABC complex, containing multiple copies of TatA, TatB and TatC subunits, and a separate TatA complex, containing only TatA subunits. Substrates initially bind to the TatABC complex, which probably triggers association of the separate TatA complex to form the active translocon.

It is found in the cell inner membrane. Its function is as follows. Part of the twin-arginine translocation (Tat) system that transports large folded proteins containing a characteristic twin-arginine motif in their signal peptide across membranes. Together with TatC, TatB is part of a receptor directly interacting with Tat signal peptides. TatB may form an oligomeric binding site that transiently accommodates folded Tat precursor proteins before their translocation. This chain is Sec-independent protein translocase protein TatB, found in Marinobacter nauticus (strain ATCC 700491 / DSM 11845 / VT8) (Marinobacter aquaeolei).